The chain runs to 143 residues: uncharacterized protein (143 aa).

This is an uncharacterized protein from Saccharomyces cerevisiae (strain ATCC 204508 / S288c) (Baker's yeast).